We begin with the raw amino-acid sequence, 300 residues long: Succinate--CoA ligase [ADP-forming] subunit alpha (300 aa).

CoA is bound by residues 17–20 (TGST), lysine 43, and 96–98 (ITE). Residue tyrosine 159 participates in substrate binding. Histidine 247 (tele-phosphohistidine intermediate) is an active-site residue.

The protein belongs to the succinate/malate CoA ligase alpha subunit family. As to quaternary structure, heterotetramer of two alpha and two beta subunits.

The catalysed reaction is succinate + ATP + CoA = succinyl-CoA + ADP + phosphate. It catalyses the reaction GTP + succinate + CoA = succinyl-CoA + GDP + phosphate. It functions in the pathway carbohydrate metabolism; tricarboxylic acid cycle; succinate from succinyl-CoA (ligase route): step 1/1. In terms of biological role, succinyl-CoA synthetase functions in the citric acid cycle (TCA), coupling the hydrolysis of succinyl-CoA to the synthesis of either ATP or GTP and thus represents the only step of substrate-level phosphorylation in the TCA. The alpha subunit of the enzyme binds the substrates coenzyme A and phosphate, while succinate binding and nucleotide specificity is provided by the beta subunit. The chain is Succinate--CoA ligase [ADP-forming] subunit alpha from Bacillus subtilis (strain 168).